Reading from the N-terminus, the 216-residue chain is uncharacterized protein (216 aa).

Positions 54–215 constitute an Integrase catalytic domain; it reads TATQPNEKWT…SPVNYRTQSL (162 aa).

This sequence belongs to the transposase IS3/IS150/IS904 family.

This is an uncharacterized protein from Haemophilus influenzae (strain ATCC 51907 / DSM 11121 / KW20 / Rd).